The sequence spans 273 residues: MKKYLLGIGLILALIACKQNVSSLDEKNSVSVDLPGEMKVLVSKEKDKDGKYSLMATVDKLELKGTSDKNNGSGVLEGVKADKSKVKLTVSDDLSTTTLEVLKEDGKTLVSKKRTSKDKSSTEEKFNEKGELVEKIMARANGTILEYTGIKSDGSGKAKETLKEYVLEGTLTAEKATLVVKEGTVTLSKHISKSGEVTAELNDTDSTQATKKTGKWDAGTSTLTITVNNKKTKALVFTKQDTITSQKYDSAGTNLEGTAVEIKTLDELKNALR.

The signal sequence occupies residues 1-16; that stretch reads MKKYLLGIGLILALIA. A lipid anchor (N-palmitoyl cysteine) is attached at Cys17. Cys17 is lipidated: S-diacylglycerol cysteine.

Belongs to the OspA lipoprotein family.

The protein resides in the cell outer membrane. It localises to the cell surface. This is Outer surface protein A from Borreliella burgdorferi (Lyme disease spirochete).